The sequence spans 524 residues: Bifunctional purine biosynthesis protein PurH (524 aa).

The region spanning 1–154 (MTRLALLSTS…KNHAHVTVLC (154 aa)) is the MGS-like domain.

It belongs to the PurH family.

The catalysed reaction is (6R)-10-formyltetrahydrofolate + 5-amino-1-(5-phospho-beta-D-ribosyl)imidazole-4-carboxamide = 5-formamido-1-(5-phospho-D-ribosyl)imidazole-4-carboxamide + (6S)-5,6,7,8-tetrahydrofolate. It catalyses the reaction IMP + H2O = 5-formamido-1-(5-phospho-D-ribosyl)imidazole-4-carboxamide. The protein operates within purine metabolism; IMP biosynthesis via de novo pathway; 5-formamido-1-(5-phospho-D-ribosyl)imidazole-4-carboxamide from 5-amino-1-(5-phospho-D-ribosyl)imidazole-4-carboxamide (10-formyl THF route): step 1/1. It participates in purine metabolism; IMP biosynthesis via de novo pathway; IMP from 5-formamido-1-(5-phospho-D-ribosyl)imidazole-4-carboxamide: step 1/1. The protein is Bifunctional purine biosynthesis protein PurH of Acaryochloris marina (strain MBIC 11017).